The following is a 738-amino-acid chain: DNA topoisomerase 4 subunit A (738 aa).

In terms of domain architecture, Topo IIA-type catalytic spans 32 to 496 (LPDVRDGLKP…SFEEVDLTNQ (465 aa)). The active-site O-(5'-phospho-DNA)-tyrosine intermediate is Tyr-120.

It belongs to the type II topoisomerase GyrA/ParC subunit family. ParC type 1 subfamily. In terms of assembly, heterotetramer composed of ParC and ParE.

Its subcellular location is the cell membrane. The enzyme catalyses ATP-dependent breakage, passage and rejoining of double-stranded DNA.. Functionally, topoisomerase IV is essential for chromosome segregation. It relaxes supercoiled DNA. Performs the decatenation events required during the replication of a circular DNA molecule. The protein is DNA topoisomerase 4 subunit A of Rickettsia prowazekii (strain Madrid E).